The sequence spans 191 residues: Protein 2 in picA locus (191 aa).

The protein belongs to the acyltransferase 3 family.

It is found in the cell membrane. Functionally, seems to regulate the surface properties of the bacterium in the presence of plant cells or plant cell extracts. This chain is Protein 2 in picA locus, found in Rhizobium radiobacter (Agrobacterium tumefaciens).